Consider the following 534-residue polypeptide: MDATAFHPSLWGDFFVKYKPPTAPKRGHMTERAELLKEEVRKTLKAAANQIKNALDLIITLQRLGLDHHYENEISELLRFVYSSSDYDDKDLYVVSLRFYLLRKHGHCVSSDVFTSFKDEEGNFVVDDTKCLLTLYNAAYLRTHGEKVLDEAITFTRRQLEASLLDPLEPALLADEVSLTLQTPLFRRLRILEAINYIPIYGKEAGRNEAILELAKLNFNLAQLIYCEELKEVTLWWKQLNVETNLSFIRDRIVECHFWMTGACCEPQYSLSRVIATKMTALITVLDDMMDTYSTTEEAMLLAEAIYGWEENAAELLPGYMKDFYLYLLKTIDSCGDELGPNRSFRTFYLKEMLKVLVRGSSQEIKWRNENYVPKTISEHLEHSGPSVGAFQVACSSFVGMGDSITKGSFEWLLTYPELAKSLMNIARLLNDTASTKREQNAGHHVSTVQCYMLMHGTTMDEACEKIKELTEDSWKDMMELYLTPTEHPKLIAQTIVDFARTADYMYKETDGFTFSHTIKDMIAKLFVDPISLF.

Positions 287, 291, 431, 435, and 439 each coordinate Mg(2+). Residues 287 to 291 carry the DDXXD motif motif; that stretch reads DDMMD.

The protein belongs to the terpene synthase family. It depends on Mg(2+) as a cofactor. Co(2+) serves as cofactor. The cofactor is Mn(2+).

The protein localises to the cytoplasm. The enzyme catalyses (2E,6E)-farnesyl diphosphate = (E)-beta-farnesene + diphosphate. The protein operates within secondary metabolite biosynthesis; terpenoid biosynthesis. In terms of biological role, sesquiterpene cyclase catalyzing the production of beta-farnesene and alpha-bergamotene in equal amounts from farnesyl diphosphate. Involved in indirect defense by producing volatile signals attracting natural enemies of herbivores. This is (E)-beta-farnesene synthase from Zea mays subsp. mexicana (Mexican teosinte).